Here is a 240-residue protein sequence, read N- to C-terminus: 6-phosphogluconolactonase (240 aa).

This sequence belongs to the glucosamine/galactosamine-6-phosphate isomerase family. 6-phosphogluconolactonase subfamily.

The catalysed reaction is 6-phospho-D-glucono-1,5-lactone + H2O = 6-phospho-D-gluconate + H(+). It participates in carbohydrate degradation; pentose phosphate pathway; D-ribulose 5-phosphate from D-glucose 6-phosphate (oxidative stage): step 2/3. In terms of biological role, hydrolysis of 6-phosphogluconolactone to 6-phosphogluconate. The protein is 6-phosphogluconolactonase (pgl) of Synechocystis sp. (strain ATCC 27184 / PCC 6803 / Kazusa).